The chain runs to 831 residues: MAFRATPGRTPPGPGPGVPSASFSSPQPAMAAPGGIEEEDEEEPAEIHLCVLWSSGYLGIAYYDTSDSTIHFMPDAPDHESLKLLQRVLDEINPQSVVTSAKQDEAMTQFLGKLASQEHREPKRPEIILLPSVDFGPEISKQRLLSGNYSFISESMTATEKILFLSSIIPFDCVLTVRALGGLLKFLSRRRVGVELEDYSVGVPILGFKKFVLTHLVSIDQDTYSVLQIFKSESHPSVYKVASGLKEGLSLFGILNRCRCRWGQKLLRLWFTRPTRELRELNSRLDVIEFFLMPQNLDMAQMMHRLLSHIKNVPLILKRMKLSHTKVSDWQVLYKTVYSALGLRDACRSLPQSIQLFRDITQEFSDDLHHIASLIGKVVDFEESLAENRFTVLPNIDPEIDAKKRRLMGLPSFLTEVAQKELENLDSCIPSCSVIYIPLIGFLLSIPRLSFMVEASDFEIEGLDFMFLSEDKLHYRSARTKELDALLGDLHCEIRDQEMLLMHQLQCQVLARAPVLTRVLDLASRLDVLLALASAARDYGYSRPHYSPCIQGVRIKNGRHPLMELCARTFVPNSTDCGGDQGRVKVITGPNSSGKSIYLKQVGLITFMALVGSFVPAEEAEIGVIDAIFTRIHSCESISLGLSTFMIDLNQVAKAVNNATEHSLVLIDEFGKGTNSVDGLALLTAVLRHWLALGPSCPHIFVATNFLSLVQLQLLPQGPLVQYLTMETCEDGNDLVFFYQLCHGVASASHASYTAAQAGLPDPLIARGKEVSDSIRSGKPVKPMHELVRRTQMENCQALVDKFLKLDLEDPSLDLDIFISQEVLPAATTIL.

The segment at 1 to 43 is disordered; the sequence is MAFRATPGRTPPGPGPGVPSASFSSPQPAMAAPGGIEEEDEEE. 589–596 is an ATP binding site; sequence GPNSSGKS.

The protein belongs to the DNA mismatch repair MutS family. Heterooligomer of MSH4 and MSH5. Interacts with HJURP. Interacts with C7h12orf40/REDIC1.

In terms of biological role, involved in DNA mismatch repair and meiotic recombination processes. Facilitates crossovers between homologs during meiosis. In Rattus norvegicus (Rat), this protein is MutS protein homolog 5 (Msh5).